A 375-amino-acid polypeptide reads, in one-letter code: Lipid-A-disaccharide synthase (375 aa).

It belongs to the LpxB family.

The enzyme catalyses a lipid X + a UDP-2-N,3-O-bis[(3R)-3-hydroxyacyl]-alpha-D-glucosamine = a lipid A disaccharide + UDP + H(+). Its pathway is bacterial outer membrane biogenesis; LPS lipid A biosynthesis. Its function is as follows. Condensation of UDP-2,3-diacylglucosamine and 2,3-diacylglucosamine-1-phosphate to form lipid A disaccharide, a precursor of lipid A, a phosphorylated glycolipid that anchors the lipopolysaccharide to the outer membrane of the cell. This chain is Lipid-A-disaccharide synthase, found in Pseudomonas putida (strain GB-1).